The primary structure comprises 576 residues: Sulfite reductase [NADPH] hemoprotein beta-component (576 aa).

Residues C434, C440, C479, and C483 each coordinate [4Fe-4S] cluster. C483 lines the siroheme pocket.

It belongs to the nitrite and sulfite reductase 4Fe-4S domain family. In terms of assembly, alpha(8)-beta(8). The alpha component is a flavoprotein, the beta component is a hemoprotein. The cofactor is siroheme. [4Fe-4S] cluster is required as a cofactor.

It catalyses the reaction hydrogen sulfide + 3 NADP(+) + 3 H2O = sulfite + 3 NADPH + 4 H(+). It participates in sulfur metabolism; hydrogen sulfide biosynthesis; hydrogen sulfide from sulfite (NADPH route): step 1/1. Functionally, component of the sulfite reductase complex that catalyzes the 6-electron reduction of sulfite to sulfide. This is one of several activities required for the biosynthesis of L-cysteine from sulfate. The polypeptide is Sulfite reductase [NADPH] hemoprotein beta-component (Oceanobacillus iheyensis (strain DSM 14371 / CIP 107618 / JCM 11309 / KCTC 3954 / HTE831)).